The primary structure comprises 106 residues: Nucleoid-associated protein Smal_0858 (106 aa).

The disordered stretch occupies residues 81-106 (IDAESKSKMGSATAGMQLPPGMKLPF).

It belongs to the YbaB/EbfC family. As to quaternary structure, homodimer.

It is found in the cytoplasm. Its subcellular location is the nucleoid. Functionally, binds to DNA and alters its conformation. May be involved in regulation of gene expression, nucleoid organization and DNA protection. The polypeptide is Nucleoid-associated protein Smal_0858 (Stenotrophomonas maltophilia (strain R551-3)).